The chain runs to 391 residues: Alpha-2B adrenergic receptor (391 aa).

A helical transmembrane segment spans residues 1 to 25; that stretch reads AIAAVITFLILFTIFGNALVILAVL. The Cytoplasmic segment spans residues 26–36; that stretch reads TSRSLRAPQNL. The chain crosses the membrane as a helical span at residues 37–62; it reads FLVSLAAADILVATLIIPFSLANELL. The Extracellular segment spans residues 63 to 72; that stretch reads GYWYFRRTWC. Cys72 and Cys151 are disulfide-bonded. A helical transmembrane segment spans residues 73-95; it reads EVYLALDVLFCTSSIVHLCAISL. Residues 96–117 are Cytoplasmic-facing; that stretch reads DRYWAVSRALEYNSKRTPRRIK. Residues 118–140 form a helical membrane-spanning segment; it reads CIILTVWLIAAVISLPPLIYKGD. At 141-156 the chain is on the extracellular side; the sequence is QGPQPRGRPQCKLNQE. A helical transmembrane segment spans residues 157–180; that stretch reads AWYILASSIGSFFAPCLIMILVYL. Residues 181–355 lie on the Cytoplasmic side of the membrane; it reads RIYLIAKRSH…LTREKRFTFV (175 aa). Disordered stretches follow at residues 194 to 218 and 233 to 312; these read PRAK…APSS and EANR…PLQQ. Residues 233 to 247 show a composition bias toward basic and acidic residues; sequence EANRHSKSTGEKVEG. The segment covering 256–266 has biased composition (pro residues); it reads PGVPPSWPPLP. A compositionally biased stretch (basic and acidic residues) spans 271 to 281; the sequence is GQEEDIYRASP. A compositionally biased stretch (acidic residues) spans 282–294; the sequence is EEEAGDDEEEECE. The segment covering 295-309 has biased composition (low complexity); that stretch reads PQAVPVSPASACSPP. Residues 356 to 379 traverse the membrane as a helical segment; that stretch reads LAVVIGVFVLCWFPFFFSYSLGAI. The Extracellular portion of the chain corresponds to 380 to 388; sequence CPQHCKVPH. The helical transmembrane segment at 389-391 threads the bilayer; that stretch reads GLF.

It belongs to the G-protein coupled receptor 1 family. Adrenergic receptor subfamily. ADRA2B sub-subfamily. Interacts with RAB26. Interacts with PPP1R9B. Interacts with GGA1, GGA2 and GGA3.

It is found in the cell membrane. Its function is as follows. Alpha-2 adrenergic receptors mediate the catecholamine-induced inhibition of adenylate cyclase through the action of G proteins. The chain is Alpha-2B adrenergic receptor (ADRA2B) from Erinaceus europaeus (Western European hedgehog).